A 364-amino-acid polypeptide reads, in one-letter code: GTPase Obg (364 aa).

The Obg domain maps to Met-1–Leu-161. The OBG-type G domain maps to Ala-162–Ser-334. GTP contacts are provided by residues Gly-168 to Ser-175, Phe-193 to Asn-197, Asp-217 to Gly-220, Asn-287 to Asp-290, and Ser-315 to Glu-317. Ser-175 and Thr-195 together coordinate Mg(2+).

This sequence belongs to the TRAFAC class OBG-HflX-like GTPase superfamily. OBG GTPase family. Monomer. Mg(2+) is required as a cofactor.

The protein localises to the cytoplasm. Functionally, an essential GTPase which binds GTP, GDP and possibly (p)ppGpp with moderate affinity, with high nucleotide exchange rates and a fairly low GTP hydrolysis rate. Plays a role in control of the cell cycle, stress response, ribosome biogenesis and in those bacteria that undergo differentiation, in morphogenesis control. The protein is GTPase Obg of Lawsonia intracellularis (strain PHE/MN1-00).